A 369-amino-acid polypeptide reads, in one-letter code: Ubiquinone biosynthesis protein COQ4, mitochondrial (369 aa).

Residues 1–28 (MTSILGSARPLIQVGPKSRNASTSMSRL) constitute a mitochondrion transit peptide. The tract at residues 1-70 (MTSILGSARP…NPTNASRHPR (70 aa)) is disordered. 2 stretches are compositionally biased toward polar residues: residues 19–33 (RNAS…SFPT) and 47–66 (YATI…TNAS). Zn(2+) contacts are provided by His-198, Asp-199, His-202, and Glu-214. The disordered stretch occupies residues 330–369 (FSGRAKKGGKRRGWPSKILEHQKAQHQQQQQQQKVDESRN). Residues 332–343 (GRAKKGGKRRGW) are compositionally biased toward basic residues.

It belongs to the COQ4 family. As to quaternary structure, component of a multi-subunit COQ enzyme complex, composed of at least COQ3, COQ4, COQ5, COQ6, COQ7 and COQ9. Zn(2+) serves as cofactor.

Its subcellular location is the mitochondrion inner membrane. It catalyses the reaction a 4-hydroxy-3-methoxy-5-(all-trans-polyprenyl)benzoate + H(+) = a 2-methoxy-6-(all-trans-polyprenyl)phenol + CO2. The protein operates within cofactor biosynthesis; ubiquinone biosynthesis. Functionally, lyase that catalyzes the C1-decarboxylation of 4-hydroxy-3-methoxy-5-(all-trans-polyprenyl)benzoic acid into 2-methoxy-6-(all-trans-polyprenyl)phenol during ubiquinone biosynthesis. In Mycosarcoma maydis (Corn smut fungus), this protein is Ubiquinone biosynthesis protein COQ4, mitochondrial.